Here is a 221-residue protein sequence, read N- to C-terminus: Lipoprotein-releasing system ATP-binding protein LolD (221 aa).

Positions 6–220 constitute an ABC transporter domain; it reads LTLKNVSKHY…YKLKHGALNM (215 aa). An ATP-binding site is contributed by 42–49; it reads GSSGSGKS.

Belongs to the ABC transporter superfamily. Lipoprotein translocase (TC 3.A.1.125) family. In terms of assembly, the complex is composed of two ATP-binding proteins (LolD) and two transmembrane proteins (LolC and LolE).

The protein localises to the cell inner membrane. Its function is as follows. Part of the ABC transporter complex LolCDE involved in the translocation of mature outer membrane-directed lipoproteins, from the inner membrane to the periplasmic chaperone, LolA. Responsible for the formation of the LolA-lipoprotein complex in an ATP-dependent manner. The chain is Lipoprotein-releasing system ATP-binding protein LolD from Rickettsia bellii (strain RML369-C).